A 573-amino-acid chain; its full sequence is Phosphoenolpyruvate-protein phosphotransferase (573 aa).

Histidine 190 functions as the Tele-phosphohistidine intermediate in the catalytic mechanism. Arginine 297 and arginine 333 together coordinate substrate. 2 residues coordinate Mg(2+): glutamate 432 and aspartate 456. 455-456 (ND) is a binding site for phosphoenolpyruvate. Arginine 466 contacts substrate. Cysteine 503 (proton donor) is an active-site residue.

Belongs to the PEP-utilizing enzyme family. Homodimer. It depends on Mg(2+) as a cofactor.

It is found in the cytoplasm. It carries out the reaction L-histidyl-[protein] + phosphoenolpyruvate = N(pros)-phospho-L-histidyl-[protein] + pyruvate. Its function is as follows. General (non sugar-specific) component of the phosphoenolpyruvate-dependent sugar phosphotransferase system (sugar PTS). This major carbohydrate active-transport system catalyzes the phosphorylation of incoming sugar substrates concomitantly with their translocation across the cell membrane. Enzyme I transfers the phosphoryl group from phosphoenolpyruvate (PEP) to the phosphoryl carrier protein (HPr). This Staphylococcus carnosus (strain TM300) protein is Phosphoenolpyruvate-protein phosphotransferase (ptsI).